Reading from the N-terminus, the 622-residue chain is Probable ATP-dependent RNA helicase DDX41 (622 aa).

Residues 1–15 (MEESEPERKRARTDE) show a composition bias toward basic and acidic residues. Disordered regions lie at residues 1–39 (MEES…YVPL) and 52–84 (QRRR…PQSN). At serine 4 the chain carries Phosphoserine. Position 9 is an N6-acetyllysine (lysine 9). A Glycyl lysine isopeptide (Lys-Gly) (interchain with G-Cter in ubiquitin) cross-link involves residue lysine 9. Residues serine 21 and serine 23 each carry the phosphoserine modification. Tyrosine 33 carries the post-translational modification Phosphotyrosine. A Glycyl lysine isopeptide (Lys-Gly) (interchain with G-Cter in ubiquitin) cross-link involves residue lysine 115. The Q motif motif lies at 181 to 209 (KSFKEMKFPAAILRGLKKKGIHHPTPIQI). The Helicase ATP-binding domain maps to 212–396 (IPTILSGRDM…KSALVKPVTI (185 aa)). 225–232 (AFTGSGKT) provides a ligand contact to ATP. Residues 344–347 (DEAD) carry the DEAD box motif. One can recognise a Helicase C-terminal domain in the interval 407 to 567 (DVIQEVEYVK…KVPPVLQVLH (161 aa)). Position 414 is a phosphotyrosine; by BTK (tyrosine 414). Glycyl lysine isopeptide (Lys-Gly) (interchain with G-Cter in SUMO2) cross-links involve residues lysine 416 and lysine 442. A CCHC-type zinc finger spans residues 580 to 597 (RGCAFCGGLGHRITDCPK).

This sequence belongs to the DEAD box helicase family. DDX41 subfamily. Identified in the spliceosome C complex. Interacts with ERCC6. Interacts with FAM50A. Interacts with STING1. Interacts with CGAS. Interacts with several spliceosomes components such as PRP19 or CDC5L. Post-translationally, acetylation at Lys-9 regulates the nuclear/cytoplasmic localization. In terms of processing, phosphorylated by BTK; phosphorylation induces binding to dsDNA and STING1. 'Lys-48'-linked ubiquitinated and degraded by TRIM21 leading to negative regulation of the innate immune response to intracellular dsDNA.

The protein resides in the nucleus. Its subcellular location is the cytoplasm. The catalysed reaction is ATP + H2O = ADP + phosphate + H(+). In terms of biological role, multifunctional protein that participates in many aspects of cellular RNA metabolism. Plays pivotal roles in innate immune sensing and hematopoietic homeostasis. Recognizes foreign or self-nucleic acids generated during microbial infection, thereby initiating anti-pathogen responses. Mechanistically, phosphorylation by BTK allows binding to dsDNA leading to interaction with STING1. Modulates the homeostasis of dsDNA through its ATP-dependent DNA-unwinding activity and ATP-independent strand-annealing activity. In turn, induces STING1-mediated type I interferon and cytokine responses to DNA and DNA viruses. Selectively modulates the transcription of certain immunity-associated genes by regulating their alternative splicing. Binds to RNA (R)-loops, structures consisting of DNA/RNA hybrids and a displaced strand of DNA that occur during transcription, and prevents their accumulation, thereby maintaining genome stability. Also participates in pre-mRNA splicing, translational regulation and snoRNA processing, which is essential for ribosome biogenesis. The protein is Probable ATP-dependent RNA helicase DDX41 (DDX41) of Homo sapiens (Human).